Reading from the N-terminus, the 339-residue chain is Phenylalanine--tRNA ligase alpha subunit (339 aa).

Mg(2+) is bound at residue Glu254.

This sequence belongs to the class-II aminoacyl-tRNA synthetase family. Phe-tRNA synthetase alpha subunit type 1 subfamily. As to quaternary structure, tetramer of two alpha and two beta subunits. Mg(2+) is required as a cofactor.

The protein resides in the cytoplasm. The enzyme catalyses tRNA(Phe) + L-phenylalanine + ATP = L-phenylalanyl-tRNA(Phe) + AMP + diphosphate + H(+). The sequence is that of Phenylalanine--tRNA ligase alpha subunit from Clostridium novyi (strain NT).